Reading from the N-terminus, the 392-residue chain is L-rhamnonate dehydratase (392 aa).

Residues His-22 and Arg-48 each contribute to the substrate site. Residues Asp-214, Glu-240, and Glu-268 each contribute to the Mg(2+) site. Residue His-318 is the Proton acceptor of the active site. Glu-338 contacts substrate.

It belongs to the mandelate racemase/muconate lactonizing enzyme family. RhamD subfamily. In terms of assembly, homooctamer; tetramer of dimers. Requires Mg(2+) as cofactor.

The enzyme catalyses L-rhamnonate = 2-dehydro-3-deoxy-L-rhamnonate + H2O. Functionally, catalyzes the dehydration of L-rhamnonate to 2-keto-3-deoxy-L-rhamnonate (KDR). The protein is L-rhamnonate dehydratase of Burkholderia ambifaria (strain ATCC BAA-244 / DSM 16087 / CCUG 44356 / LMG 19182 / AMMD) (Burkholderia cepacia (strain AMMD)).